A 98-amino-acid chain; its full sequence is Feather keratin 3 (98 aa).

The protein belongs to the avian keratin family. In terms of assembly, the avian keratins (F-ker, S-ker, C-ker and B-ker) are a complex mixture of very similar polypeptides.

This is Feather keratin 3 from Gallus gallus (Chicken).